Consider the following 225-residue polypeptide: MHIHDWPTNERPREKLLARGATALSDAELLAIFVGSGLRGQDAVQTARDLLHRHGPLRPLLDRPAKALERLPGLGPASACKLAAALELAHRHLMSALERGEALSDPPSVGRYFSQRLRARAYEVFAVLFLDNRHRAIAFEELFTGTIDGADIHPREVVRRALLHNAAAVIVGHNHPSGNPEPSKADRAVTKRLLDSLELVDIRLLDHFVIGDGRPVSLAERGWLE.

The MPN domain maps to 102 to 224 (ALSDPPSVGR…PVSLAERGWL (123 aa)). Zn(2+) is bound by residues histidine 173, histidine 175, and aspartate 186. Positions 173–186 (HNHPSGNPEPSKAD) match the JAMM motif motif.

Belongs to the UPF0758 family.

The chain is UPF0758 protein XOO0495 from Xanthomonas oryzae pv. oryzae (strain KACC10331 / KXO85).